Reading from the N-terminus, the 242-residue chain is Small ribosomal subunit protein uS2 (242 aa).

Belongs to the universal ribosomal protein uS2 family.

The chain is Small ribosomal subunit protein uS2 from Shewanella pealeana (strain ATCC 700345 / ANG-SQ1).